The primary structure comprises 373 residues: Gametogenetin-binding protein 1 (373 aa).

Disordered stretches follow at residues 26 to 113 (VGSK…GSQT) and 237 to 268 (KAQRPDADAPQFALKDSSPTEERGEREEAVDE). Residues 36 to 49 (NRPLNRSQPSSSPE) show a composition bias toward polar residues. Positions 226-373 (LYKQLQKSAM…DEMGNWPPPE (148 aa)) are required for induction of mitochondrial fragmentation. A compositionally biased stretch (basic and acidic residues) spans 254–263 (SPTEERGERE). Residues 301–373 (KTFRSTDTVG…DEMGNWPPPE (73 aa)) form an interaction with GGN region.

In terms of assembly, interacts with CCDC159. Interacts with GGN.

Its subcellular location is the cytoplasm. It localises to the membrane. The protein resides in the golgi apparatus. The protein localises to the mitochondrion intermembrane space. In terms of biological role, induces mitochondrial fragmentation, possibly by promoting DNM1L-dependent fission and may play a role in mitochondrial morphogenesis during spermatogenesis. This is Gametogenetin-binding protein 1 (Ggnbp1) from Rattus norvegicus (Rat).